The chain runs to 203 residues: MGRQGNIHRVTGETEVRVAIGLDGSGQCEVSTGVPFLDHMLHQLASHGLFDLTISATGDTHIDDHHTNEDVGIALGQALGQALADRRGIHRFGHFVAPLDEALVQVALDCSGRPHVSYSLAIPAQKIGSYDTELVKEFFVAVANNAGLTLHIRQLDGVNSHHIVEACFKAFARALRMATEIDPRRASAIPSSKGVLEQAGTTG.

The protein belongs to the imidazoleglycerol-phosphate dehydratase family.

It localises to the cytoplasm. It carries out the reaction D-erythro-1-(imidazol-4-yl)glycerol 3-phosphate = 3-(imidazol-4-yl)-2-oxopropyl phosphate + H2O. It functions in the pathway amino-acid biosynthesis; L-histidine biosynthesis; L-histidine from 5-phospho-alpha-D-ribose 1-diphosphate: step 6/9. The protein is Imidazoleglycerol-phosphate dehydratase of Synechococcus sp. (strain RCC307).